A 359-amino-acid chain; its full sequence is DNA polymerase IV (359 aa).

In terms of domain architecture, UmuC spans 4–185 (IIHIDMDCYF…LPLSKIPGVG (182 aa)). Mg(2+)-binding residues include aspartate 8 and aspartate 103. Glutamate 104 is a catalytic residue.

This sequence belongs to the DNA polymerase type-Y family. Monomer. It depends on Mg(2+) as a cofactor.

It is found in the cytoplasm. The enzyme catalyses DNA(n) + a 2'-deoxyribonucleoside 5'-triphosphate = DNA(n+1) + diphosphate. Poorly processive, error-prone DNA polymerase involved in untargeted mutagenesis. Copies undamaged DNA at stalled replication forks, which arise in vivo from mismatched or misaligned primer ends. These misaligned primers can be extended by PolIV. Exhibits no 3'-5' exonuclease (proofreading) activity. May be involved in translesional synthesis, in conjunction with the beta clamp from PolIII. The sequence is that of DNA polymerase IV from Shewanella frigidimarina (strain NCIMB 400).